The primary structure comprises 152 residues: uncharacterized protein (152 aa).

Positions M1 to A23 are cleaved as a signal peptide.

Belongs to the asfivirus EP152R family.

It is found in the virion. This is an uncharacterized protein from Ornithodoros (relapsing fever ticks).